The primary structure comprises 276 residues: Alpha N-terminal protein methyltransferase 1 (276 aa).

The interval 1–57 is disordered; it reads MTTTLEEQLSDKLQMMDETTDKVQGSSKQKDDSSIAASSDAKTASPSSSDSSTKVAA. Residues 34 to 57 show a composition bias toward low complexity; sequence SIAASSDAKTASPSSSDSSTKVAA. S-adenosyl-L-methionine contacts are provided by residues glycine 114, arginine 119, 136-138, 167-168, and glutamine 182; these read EQD and LQ.

The protein belongs to the methyltransferase superfamily. NTM1 family.

It carries out the reaction N-terminal L-alanyl-L-prolyl-L-lysyl-[protein] + 3 S-adenosyl-L-methionine = N-terminal N,N,N-trimethyl-L-alanyl-L-prolyl-L-lysyl-[protein] + 3 S-adenosyl-L-homocysteine + 3 H(+). It catalyses the reaction N-terminal L-seryl-L-prolyl-L-lysyl-[protein] + 3 S-adenosyl-L-methionine = N-terminal N,N,N-trimethyl-L-seryl-L-prolyl-L-lysyl-[protein] + 3 S-adenosyl-L-homocysteine + 3 H(+). The enzyme catalyses N-terminal L-prolyl-L-prolyl-L-lysyl-[protein] + 2 S-adenosyl-L-methionine = N-terminal N,N-dimethyl-L-prolyl-L-prolyl-L-lysyl-[protein] + 2 S-adenosyl-L-homocysteine + 2 H(+). In terms of biological role, alpha-N-methyltransferase that methylates the N-terminus of target proteins containing the N-terminal motif [Ala/Pro/Ser]-Pro-Lys when the initiator Met is cleaved. Specifically catalyzes mono-, di- or tri-methylation of exposed alpha-amino group of Ala or Ser residue in the [Ala/Ser]-Pro-Lys motif and mono- or di-methylation of Pro in the Pro-Pro-Lys motif. The sequence is that of Alpha N-terminal protein methyltransferase 1 (Ntmt) from Drosophila melanogaster (Fruit fly).